The sequence spans 146 residues: MEGQQKFNQLLNEINVYKQQGDLIQQQIELVRASIAEVDALTNTLDDLEGKDSVEAFVPVGAGSFIKGELKNTDEVIVSIGSGIAVKKDVDGARETIARQKKDLEDSLDKMLANMQQVSDIIGSLSAQAEQLAAVAQGNMSATGLN.

The protein belongs to the prefoldin alpha subunit family. Heterohexamer of two alpha and four beta subunits.

Its subcellular location is the cytoplasm. Molecular chaperone capable of stabilizing a range of proteins. Seems to fulfill an ATP-independent, HSP70-like function in archaeal de novo protein folding. The polypeptide is Prefoldin subunit alpha (Methanobrevibacter smithii (strain ATCC 35061 / DSM 861 / OCM 144 / PS)).